The sequence spans 155 residues: Transcriptional repressor NrdR (155 aa).

A zinc finger spans residues 3–34 (CPFCGNIDTQVKDSRPAEDHVSIRRRRFCPAC). An ATP-cone domain is found at 49-139 (LVVIKSTGKR…VYKNFQAADD (91 aa)).

Belongs to the NrdR family. It depends on Zn(2+) as a cofactor.

In terms of biological role, negatively regulates transcription of bacterial ribonucleotide reductase nrd genes and operons by binding to NrdR-boxes. The chain is Transcriptional repressor NrdR from Roseobacter denitrificans (strain ATCC 33942 / OCh 114) (Erythrobacter sp. (strain OCh 114)).